The following is a 377-amino-acid chain: tRNA/tmRNA (uracil-C(5))-methyltransferase (377 aa).

S-adenosyl-L-methionine-binding residues include Q199, Y227, N232, E248, and D308. C333 acts as the Nucleophile in catalysis. E367 (proton acceptor) is an active-site residue.

This sequence belongs to the class I-like SAM-binding methyltransferase superfamily. RNA M5U methyltransferase family. TrmA subfamily.

The enzyme catalyses uridine(54) in tRNA + S-adenosyl-L-methionine = 5-methyluridine(54) in tRNA + S-adenosyl-L-homocysteine + H(+). The catalysed reaction is uridine(341) in tmRNA + S-adenosyl-L-methionine = 5-methyluridine(341) in tmRNA + S-adenosyl-L-homocysteine + H(+). Functionally, dual-specificity methyltransferase that catalyzes the formation of 5-methyluridine at position 54 (m5U54) in all tRNAs, and that of position 341 (m5U341) in tmRNA (transfer-mRNA). In Aeromonas salmonicida (strain A449), this protein is tRNA/tmRNA (uracil-C(5))-methyltransferase.